The chain runs to 424 residues: Double homeobox protein 4-like protein 2 (424 aa).

Residues 1–10 (MALPTPSDST) show a composition bias toward polar residues. Disordered regions lie at residues 1-24 (MALPTPSDSTLPAEARGRGRRRRL), 72-102 (SRQLRQHRRESRPWPGRRGPPEGRRKRTAVT), 148-167 (RHPGQGGRAPAQAGGLCSAA), 218-362 (LQPS…LQEP), and 388-414 (QPLLETEAPGELEASEEAASLEAPLSE). 2 consecutive DNA-binding regions (homeobox) follow at residues 19 to 78 (GRRR…LRQH) and 94 to 153 (GRRK…PGQG). The span at 265–274 (KSREDRDPQR) shows a compositional bias: basic and acidic residues. 2 stretches are compositionally biased toward low complexity: residues 278-302 (PGPCAVAQPGPAQAGPQGQGVLAPP) and 319-329 (AGAAWEPQAGA).

It is found in the nucleus. May be involved in transcriptional regulation. The sequence is that of Double homeobox protein 4-like protein 2 (DUX4L2) from Homo sapiens (Human).